The sequence spans 512 residues: Histidine ammonia-lyase (512 aa).

Residues 143–145 constitute a cross-link (5-imidazolinone (Cys-Gly)); the sequence is CSG. Position 144 is a 2,3-didehydroalanine (Ser) (Ser144).

It belongs to the PAL/histidase family. In terms of processing, contains an active site 4-methylidene-imidazol-5-one (MIO), which is formed autocatalytically by cyclization and dehydration of residues Cys-Ser-Gly.

It localises to the cytoplasm. The enzyme catalyses L-histidine = trans-urocanate + NH4(+). Its pathway is amino-acid degradation; L-histidine degradation into L-glutamate; N-formimidoyl-L-glutamate from L-histidine: step 1/3. The chain is Histidine ammonia-lyase from Streptomyces coelicolor (strain ATCC BAA-471 / A3(2) / M145).